A 371-amino-acid polypeptide reads, in one-letter code: Protein STRICTOSIDINE SYNTHASE-LIKE 7 (371 aa).

Positions 1–25 are cleaved as a signal peptide; sequence MPVLFSSRSLILSIIVPLLISIALY. Asparagine 101, asparagine 137, and asparagine 285 each carry an N-linked (GlcNAc...) asparagine glycan. Tyrosine 303 is subject to Phosphotyrosine.

The protein belongs to the strictosidine synthase family.

The protein localises to the vacuole. This chain is Protein STRICTOSIDINE SYNTHASE-LIKE 7, found in Arabidopsis thaliana (Mouse-ear cress).